A 216-amino-acid chain; its full sequence is MSTSYYPHPIIAREGWPFIAGAFVVALVVQFFAGWVWALPLWLVALLVLQFFRDPPRVIPTLAGAVLAPADGRIVAVDKVQDPYLSREALKISVFMNVFNVHSNRSPVDGEIRDQWYFPGSFLNASLPKASLENERNALWIRTKEGRDVTCVQIAGLIAKRIVCHVHPGEHLARGQRFGFIRFGSRVDVYLPPGMKVNVGIGDKVQATQTVLAEFR.

Ser185 functions as the Schiff-base intermediate with substrate; via pyruvic acid in the catalytic mechanism. The residue at position 185 (Ser185) is a Pyruvic acid (Ser); by autocatalysis.

It belongs to the phosphatidylserine decarboxylase family. PSD-A subfamily. Heterodimer of a large membrane-associated beta subunit and a small pyruvoyl-containing alpha subunit. Pyruvate serves as cofactor. Is synthesized initially as an inactive proenzyme. Formation of the active enzyme involves a self-maturation process in which the active site pyruvoyl group is generated from an internal serine residue via an autocatalytic post-translational modification. Two non-identical subunits are generated from the proenzyme in this reaction, and the pyruvate is formed at the N-terminus of the alpha chain, which is derived from the carboxyl end of the proenzyme. The post-translation cleavage follows an unusual pathway, termed non-hydrolytic serinolysis, in which the side chain hydroxyl group of the serine supplies its oxygen atom to form the C-terminus of the beta chain, while the remainder of the serine residue undergoes an oxidative deamination to produce ammonia and the pyruvoyl prosthetic group on the alpha chain.

Its subcellular location is the cell membrane. It carries out the reaction a 1,2-diacyl-sn-glycero-3-phospho-L-serine + H(+) = a 1,2-diacyl-sn-glycero-3-phosphoethanolamine + CO2. It functions in the pathway phospholipid metabolism; phosphatidylethanolamine biosynthesis; phosphatidylethanolamine from CDP-diacylglycerol: step 2/2. Functionally, catalyzes the formation of phosphatidylethanolamine (PtdEtn) from phosphatidylserine (PtdSer). In Nitrosomonas eutropha (strain DSM 101675 / C91 / Nm57), this protein is Phosphatidylserine decarboxylase proenzyme.